The sequence spans 337 residues: Glutaminase-asparaginase (337 aa).

Residues 10 to 337 (ANVVILATGG…KELQRIFWEY (328 aa)) enclose the Asparaginase/glutaminase domain. T20 serves as the catalytic Acyl-ester intermediate. Substrate contacts are provided by residues S67 and 100 to 101 (TD).

The protein belongs to the asparaginase 1 family. In terms of assembly, homotetramer.

It is found in the periplasm. It catalyses the reaction L-glutamine + H2O = L-glutamate + NH4(+). The enzyme catalyses L-asparagine + H2O = L-aspartate + NH4(+). This chain is Glutaminase-asparaginase (ansB), found in Pseudomonas sp. (strain ATCC 29598 / 7A).